The sequence spans 209 residues: Mitochondrial import inner membrane translocase subunit Tim23 (209 aa).

The next 3 membrane-spanning stretches (helical) occupy residues Phe73–Met93, Ala125–Ile145, and Gly172–Tyr194.

It belongs to the Tim17/Tim22/Tim23 family. Component of the TIM23 complex at least composed of TIMM23, TIMM17 (TIMM17A or TIMM17B) and TIMM50; within this complex, directly interacts with TIMM50. The complex interacts with the TIMM44 component of the PAM complex and with DNAJC15. Upon mitochondrial depolarization, interacts with PINK1; the interaction is required for PINK1 accumulation at the outer mitochondrial membrane, kinase activation by autophosphorylation and PRKN recruitement to mitochondria.

The protein resides in the mitochondrion inner membrane. In terms of biological role, essential component of the TIM23 complex, a complex that mediates the translocation of transit peptide-containing proteins across the mitochondrial inner membrane. Has a role in the activation of stress-induced mitophagy by protecting PINK1 from OMA1-mediated degradation and facilitating its accumulation at the outer mitochondrial membrane in response to depolarization. This chain is Mitochondrial import inner membrane translocase subunit Tim23 (TIMM23), found in Bos taurus (Bovine).